The sequence spans 72 residues: Translation initiation factor IF-1 (72 aa).

Positions 1–72 (MAKDDVIEVE…TRGRITYRYK (72 aa)) constitute an S1-like domain. A Phosphotyrosine modification is found at Tyr60.

The protein belongs to the IF-1 family. In terms of assembly, component of the 30S ribosomal translation pre-initiation complex which assembles on the 30S ribosome in the order IF-2 and IF-3, IF-1 and N-formylmethionyl-tRNA(fMet); mRNA recruitment can occur at any time during PIC assembly.

The protein resides in the cytoplasm. Its function is as follows. One of the essential components for the initiation of protein synthesis. Stabilizes the binding of IF-2 and IF-3 on the 30S subunit to which N-formylmethionyl-tRNA(fMet) subsequently binds. Helps modulate mRNA selection, yielding the 30S pre-initiation complex (PIC). Upon addition of the 50S ribosomal subunit IF-1, IF-2 and IF-3 are released leaving the mature 70S translation initiation complex. This chain is Translation initiation factor IF-1, found in Bacillus pumilus (strain SAFR-032).